A 95-amino-acid polypeptide reads, in one-letter code: Small ribosomal subunit protein bS20c (95 aa).

It belongs to the bacterial ribosomal protein bS20 family.

The protein localises to the plastid. Its subcellular location is the cyanelle. Functionally, binds directly to 16S ribosomal RNA. This chain is Small ribosomal subunit protein bS20c (rps20), found in Cyanophora paradoxa.